A 774-amino-acid polypeptide reads, in one-letter code: Formin-like protein 13 (774 aa).

A signal peptide spans 1-22 (MRRRVALSTAIALLVGAQLCVA). Positions 51-67 (PPPPMSGSEAVPPPPPA) are enriched in pro residues. The disordered stretch occupies residues 51–78 (PPPPMSGSEAVPPPPPAAAASATTGGGR). A compositionally biased stretch (low complexity) spans 68–78 (AAASATTGGGR). Residues 89 to 109 (IALSAGLVALAVASYSCCLLL) traverse the membrane as a helical segment. Disordered stretches follow at residues 130–163 (AAAAVAARVPSDVGSSSRQHRSPPPSSTASDAIY), 176–338 (HEKS…HLKP), 374–402 (FLNSGGGGAGSSDPAARRGGSGKQERRLL), and 740–774 (GSGKSFRVPAGTSLPPHRNENRRVLSSSDEDSSSS). Over residues 194–216 (DLRPLPPLKRPESQPPPPPPSTP) the composition is skewed to pro residues. Low complexity predominate over residues 242–261 (SSFSRSTSQHSTLEQTAMPP). Over residues 262–286 (MAAPAPPQTNPPRPVRPPPPPPPPR) the composition is skewed to pro residues. The region spanning 326–749 (GAARPPKPPH…GSGKSFRVPA (424 aa)) is the FH2 domain.

Belongs to the formin-like family. Class-I subfamily.

It localises to the membrane. The sequence is that of Formin-like protein 13 (FH13) from Oryza sativa subsp. japonica (Rice).